The sequence spans 169 residues: NADH dehydrogenase [ubiquinone] 1 alpha subcomplex assembly factor 2 (169 aa).

Positions 116–169 (TSEELLPPPVQTQIKGHASAPYFGKEEPSVAPSSTGKTFQPGSWMPRDGKSHNQ) are disordered. At serine 134 the chain carries Phosphoserine. Over residues 146 to 156 (APSSTGKTFQP) the composition is skewed to polar residues.

It belongs to the complex I NDUFA12 subunit family. As to quaternary structure, interacts with ARMC9. Highly expressed in ESCC cells. Also expressed in heart, skeletal muscle, liver, and in fibroblasts.

The protein resides in the mitochondrion. Its function is as follows. Acts as a molecular chaperone for mitochondrial complex I assembly. Complex I functions in the transfer of electrons from NADH to the respiratory chain. The immediate electron acceptor for the enzyme is believed to be ubiquinone. Is involved in the initial steps of cilia formation, including removal of CP110 from the mother centrioles, docking of membrane vesicles to the mother centrioles, and establishment of the transition zone. In Homo sapiens (Human), this protein is NADH dehydrogenase [ubiquinone] 1 alpha subcomplex assembly factor 2 (NDUFAF2).